The primary structure comprises 297 residues: Phosphoribosylaminoimidazole-succinocarboxamide synthase (297 aa).

Belongs to the SAICAR synthetase family.

It catalyses the reaction 5-amino-1-(5-phospho-D-ribosyl)imidazole-4-carboxylate + L-aspartate + ATP = (2S)-2-[5-amino-1-(5-phospho-beta-D-ribosyl)imidazole-4-carboxamido]succinate + ADP + phosphate + 2 H(+). Its pathway is purine metabolism; IMP biosynthesis via de novo pathway; 5-amino-1-(5-phospho-D-ribosyl)imidazole-4-carboxamide from 5-amino-1-(5-phospho-D-ribosyl)imidazole-4-carboxylate: step 1/2. In Mycobacterium ulcerans (strain Agy99), this protein is Phosphoribosylaminoimidazole-succinocarboxamide synthase.